The chain runs to 501 residues: Actin-binding protein WASF3 (501 aa).

Positions 57–93 (NEANNFYIRANSLQDRIDRLAVKVTQLDSTVEEVSLQ) form a coiled coil. Residue Y151 is modified to Phosphotyrosine; by ABL1. Residues 162–206 (KEKMLQDTEDKRKEKRRQKEQKRVDGTTREVKKVRKARNRRQEWN) are a coiled coil. The disordered stretch occupies residues 170-443 (EDKRKEKRRQ…PPISDARSDL (274 aa)). The span at 182–192 (QKRVDGTTREV) shows a compositional bias: basic and acidic residues. Over residues 219-237 (RLSQSVHHGASSEGSLSPD) the composition is skewed to polar residues. Y248 is modified (phosphotyrosine; by ABL1). The span at 256–267 (HALQAQPATPSY) shows a compositional bias: polar residues. Pro residues predominate over residues 302–312 (QQPPPPPPPQA). Y337 is subject to Phosphotyrosine; by ABL1. Pro residues-rich tracts occupy residues 341–352 (SGPPPPPPPPMI) and 394–410 (APPPPGPPPPPPGPPGP). A compositionally biased stretch (low complexity) spans 411–422 (SSLSSSPMHGPP). The 18-residue stretch at 439 to 456 (ARSDLLAAIRMGIQLKKV) folds into the WH2 domain. The residue at position 485 (Y485) is a Phosphotyrosine; by ABL1.

This sequence belongs to the SCAR/WAVE family. In terms of assembly, binds actin and the Arp2/3 complex. Post-translationally, phosphorylation by ABL1 promotes lamellipodia formation and cell migration.

It is found in the cytoplasm. It localises to the cytoskeleton. Downstream effector molecules involved in the transmission of signals from tyrosine kinase receptors and small GTPases to the actin cytoskeleton. Plays a role in the regulation of cell morphology and cytoskeletal organization. Required in the control of cell shape. The sequence is that of Actin-binding protein WASF3 (Wasf3) from Mus musculus (Mouse).